We begin with the raw amino-acid sequence, 443 residues long: Nuclear pore complex-interacting protein family member B15 (443 aa).

The first 18 residues, 1–18 (MRLRFWLLIWLLLGFISH), serve as a signal peptide directing secretion. N-linked (GlcNAc...) asparagine glycosylation is present at N111. Disordered regions lie at residues 242–262 (RMGR…NSLS) and 330–413 (SPLP…TRHC). Positions 252–262 (QQHSITDNSLS) are enriched in polar residues. Basic and acidic residues predominate over residues 351 to 393 (EAEKPPKPKRWRVDEVEQSPKPKRRRADEVEQSPKPKRQREAE). The segment covering 399-412 (KPKRRRLSKLRTRH) has biased composition (basic residues).

The protein belongs to the NPIP family.

It localises to the secreted. This is Nuclear pore complex-interacting protein family member B15 (NPIPB15) from Homo sapiens (Human).